The chain runs to 63 residues: Mu-like prophage FluMu protein gp38 (63 aa).

This sequence to phage Mu protein gp38.

The chain is Mu-like prophage FluMu protein gp38 from Haemophilus influenzae (strain ATCC 51907 / DSM 11121 / KW20 / Rd).